A 153-amino-acid chain; its full sequence is Interleukin-4 (153 aa).

An N-terminal signal peptide occupies residues 1 to 24 (MGLTSQLLPPLFFLLACAGNFAHG). Intrachain disulfides connect cysteine 27-cysteine 151, cysteine 48-cysteine 89, and cysteine 70-cysteine 123. A glycan (N-linked (GlcNAc...) asparagine) is linked at asparagine 62.

This sequence belongs to the IL-4/IL-13 family.

The protein resides in the secreted. Participates in at least several B-cell activation processes as well as of other cell types. It is a costimulator of DNA-synthesis. It induces the expression of class II MHC molecules on resting B-cells. It enhances both secretion and cell surface expression of IgE and IgG1. It also regulates the expression of the low affinity Fc receptor for IgE (CD23) on both lymphocytes and monocytes. Positively regulates IL31RA expression in macrophages. Stimulates autophagy in dendritic cells by interfering with mTORC1 signaling and through the induction of RUFY4. The protein is Interleukin-4 (IL4) of Papio anubis (Olive baboon).